A 570-amino-acid chain; its full sequence is Zinc finger and BTB domain-containing protein 44 (570 aa).

A Glycyl lysine isopeptide (Lys-Gly) (interchain with G-Cter in SUMO2) cross-link involves residue lysine 4. One can recognise a BTB domain in the interval 31-98; sequence CDITIRVQDK…AYTATLSINT (68 aa). Phosphoserine is present on residues serine 135, serine 159, serine 161, serine 165, serine 191, and serine 194. 2 disordered regions span residues 194–220 and 243–267; these read SPVK…NRNQ and EKVK…RRMA. The segment covering 199-220 has biased composition (polar residues); that stretch reads GTQTSSPQVLNSSASYSENRNQ. Threonine 200 bears the Phosphothreonine mark. Residue lysine 290 forms a Glycyl lysine isopeptide (Lys-Gly) (interchain with G-Cter in SUMO2) linkage. The segment at 295 to 369 is disordered; the sequence is SDEEVHEEVS…NAPPDDDDRL (75 aa). Residues 304–318 are compositionally biased toward low complexity; the sequence is SQPVSASQSSLSDQQ. Polar residues predominate over residues 352 to 361; that stretch reads TLQSTSSTNA. C2H2-type zinc fingers lie at residues 399–421, 427–449, 455–479, and 487–511; these read FQCP…MLIH, FQCD…RLKH, FRCQ…VSRH, and YECK…SLNH.

Its subcellular location is the nucleus. Its function is as follows. May be involved in transcriptional regulation. The protein is Zinc finger and BTB domain-containing protein 44 (ZBTB44) of Homo sapiens (Human).